We begin with the raw amino-acid sequence, 412 residues long: Putative competence-damage inducible protein (412 aa).

It belongs to the CinA family.

The protein is Putative competence-damage inducible protein of Clostridium perfringens (strain 13 / Type A).